The primary structure comprises 1399 residues: DNA-directed RNA polymerase subunit beta' (1399 aa).

Cys70, Cys72, Cys85, and Cys88 together coordinate Zn(2+). The Mg(2+) site is built by Asp460, Asp462, and Asp464. 4 residues coordinate Zn(2+): Cys814, Cys888, Cys895, and Cys898.

It belongs to the RNA polymerase beta' chain family. The RNAP catalytic core consists of 2 alpha, 1 beta, 1 beta' and 1 omega subunit. When a sigma factor is associated with the core the holoenzyme is formed, which can initiate transcription. It depends on Mg(2+) as a cofactor. Zn(2+) is required as a cofactor.

It carries out the reaction RNA(n) + a ribonucleoside 5'-triphosphate = RNA(n+1) + diphosphate. Its function is as follows. DNA-dependent RNA polymerase catalyzes the transcription of DNA into RNA using the four ribonucleoside triphosphates as substrates. This is DNA-directed RNA polymerase subunit beta' from Ectopseudomonas mendocina (strain ymp) (Pseudomonas mendocina).